The primary structure comprises 236 residues: Phosphoribosylaminoimidazole-succinocarboxamide synthase (236 aa).

The protein belongs to the SAICAR synthetase family.

The enzyme catalyses 5-amino-1-(5-phospho-D-ribosyl)imidazole-4-carboxylate + L-aspartate + ATP = (2S)-2-[5-amino-1-(5-phospho-beta-D-ribosyl)imidazole-4-carboxamido]succinate + ADP + phosphate + 2 H(+). Its pathway is purine metabolism; IMP biosynthesis via de novo pathway; 5-amino-1-(5-phospho-D-ribosyl)imidazole-4-carboxamide from 5-amino-1-(5-phospho-D-ribosyl)imidazole-4-carboxylate: step 1/2. This chain is Phosphoribosylaminoimidazole-succinocarboxamide synthase, found in Pseudomonas paraeruginosa (strain DSM 24068 / PA7) (Pseudomonas aeruginosa (strain PA7)).